A 276-amino-acid polypeptide reads, in one-letter code: Transcriptional antiactivator ExsD (276 aa).

Can form homotrimer. Interacts with ExsA; this interaction inhibits ExsA activity. Interacts with ExsC; this interaction dissociates the ExsD-ExsA complex.

Its function is as follows. Negative regulator of the type III secretion system regulon. Acts by disrupting transcriptional activator ExsA self-association and DNA-binding activity in absence of inducing signals. Upon host cell contact, this interaction is disrupted by the anti-antiactivator protein ExsC leading to ExsA activation. This chain is Transcriptional antiactivator ExsD (exsD), found in Pseudomonas aeruginosa (strain ATCC 15692 / DSM 22644 / CIP 104116 / JCM 14847 / LMG 12228 / 1C / PRS 101 / PAO1).